Here is a 367-residue protein sequence, read N- to C-terminus: MMKRFGKTLLALTLAGSVAGMAQAADNKVLHVYNWSDYIAPDTLEKFTKETGIKVVYDVYDSNEVLEAKLLAGKSGYDVVVPSNSFLAKQIKAGVYQKLDKSKLPNWKNLNKDLMHTLEVSDPGNEHAIPYMWGTIGIGYNPDKVKAAFGDNAPVDSWDLVFKPENIQKLKQCGVSFLDSPTEILPAALHYLGYKPDTDNPKELKAAEELFLKIRPYVTYFHSSKYISDLANGNICVAIGYSGDIYQAKSRAEEAKNKVTVKYNIPKEGAGSFFDMVAIPKDAENTEGALAFVNFLMKPEIMAEITDVVQFPNGNAAATPLVSEAIRNDPGIYPSEEVMKKLYTFPDLPAKTQRAMTRSWTKIKSGK.

A signal peptide spans 1–24 (MMKRFGKTLLALTLAGSVAGMAQA). Putrescine is bound at residue 36–37 (SD). The cysteines at positions 173 and 236 are disulfide-linked. Residues Asp244 and Asp275 each contribute to the putrescine site.

Belongs to the bacterial solute-binding protein PotD/PotF family.

Its subcellular location is the periplasm. The protein resides in the secreted. Its function is as follows. Putrescine-binding protein probably required for putrescine uptake into cells. Binds putrescine with high affinity, spermidine with relatively low affinity. Does not bind cadaverine or spermine. Putrescine binding induces large inter-domain conformational changes. The sequence is that of Putrescine-binding periplasmic protein SpuD (spuD) from Pseudomonas aeruginosa (strain UCBPP-PA14).